A 241-amino-acid chain; its full sequence is ATP synthase subunit a (241 aa).

Helical transmembrane passes span 30–50, 91–111, 128–148, 193–213, and 214–234; these read GQVF…ISLG, FIGT…LIPW, INTT…AGLS, LVVG…VMFL, and GLFT…YYIG.

It belongs to the ATPase A chain family. As to quaternary structure, F-type ATPases have 2 components, CF(1) - the catalytic core - and CF(0) - the membrane proton channel. CF(1) has five subunits: alpha(3), beta(3), gamma(1), delta(1), epsilon(1). CF(0) has four main subunits: a, b, b' and c.

The protein resides in the cellular thylakoid membrane. Its function is as follows. Key component of the proton channel; it plays a direct role in the translocation of protons across the membrane. This is ATP synthase subunit a from Prochlorococcus marinus (strain MIT 9312).